The chain runs to 526 residues: Biotin carboxylase 2, chloroplastic (526 aa).

Residues 1–71 constitute a chloroplast transit peptide; it reads MEATLPVCKS…GVTCRAEKIL (71 aa). ATP-binding positions include K181, 213-274, K223, 229-230, 265-268, and H273; these read ASEI…PRHI, GG, and EKYV. The ATP-grasp domain occupies 185-382; sequence RETMKKANVP…LIEEQIRVAM (198 aa). K302 lines the hydrogencarbonate pocket. ATP-binding residues include E340 and E353. Residues E340, E353, and N355 each coordinate Mg(2+). Residues E340, E353, and N355 each contribute to the Mn(2+) site. Hydrogencarbonate contacts are provided by R357, V360, and R403. The active site involves R357. A biotin-binding site is contributed by R403.

As to quaternary structure, acetyl-CoA carboxylase is a heterohexamer composed of biotin carboxyl carrier protein, biotin carboxylase and two subunits each of ACCase subunit alpha and ACCase plastid-coded subunit beta (accD). Requires Mg(2+) as cofactor. Mn(2+) is required as a cofactor.

Its subcellular location is the plastid. The protein localises to the chloroplast. The enzyme catalyses N(6)-biotinyl-L-lysyl-[protein] + hydrogencarbonate + ATP = N(6)-carboxybiotinyl-L-lysyl-[protein] + ADP + phosphate + H(+). The protein operates within lipid metabolism; malonyl-CoA biosynthesis; malonyl-CoA from acetyl-CoA: step 1/1. Its function is as follows. This protein is a component of the acetyl coenzyme A carboxylase complex; first, biotin carboxylase catalyzes the carboxylation of the carrier protein and then the transcarboxylase transfers the carboxyl group to form malonyl-CoA. The chain is Biotin carboxylase 2, chloroplastic from Populus trichocarpa (Western balsam poplar).